The following is a 147-amino-acid chain: Leghemoglobin 8 (147 aa).

In terms of domain architecture, Globin spans 2–147; the sequence is GFTEKQESLV…LAASIKKSMS (146 aa). A nitrated tyrosine mark is found at Tyr-25 and Tyr-30. Ser-45 provides a ligand contact to heme b. Phosphoserine is present on Ser-45. His-62 lines the O2 pocket. Heme b-binding residues include Lys-65, His-94, and Lys-97. Tyr-135 carries the post-translational modification Nitrated tyrosine.

The protein belongs to the plant globin family. As to quaternary structure, monomer. Interacts with CAS31 in the cytoplasm; this interaction leads to its protection from denaturation under thermal and drought stresses. Post-translationally, nitrated in effective nodules and particularly in hypoxic conditions; this mechanism may play a protective role in the symbiosis by buffering toxic peroxynitrite NO(2)(-). Nitration level decrease during nodule senescence. Phosphorylation at Ser-45 disrupts the molecular environment of its porphyrin ring oxygen binding pocket, thus leading to a reduced oxygen consumption and to the delivery of oxygen O(2) to symbiosomes. Root nodules.

Its subcellular location is the cytoplasm. The protein resides in the nucleus. Leghemoglobin that reversibly binds oxygen O(2) through a pentacoordinated heme iron. In root nodules, facilitates the diffusion of oxygen to the bacteroids while preventing the bacterial nitrogenase from being inactivated by buffering dioxygen, nitric oxide and carbon monoxide, and promoting the formation of reactive oxygen species (ROS, e.g. H(2)O(2)). This role is essential for symbiotic nitrogen fixation (SNF). In Medicago truncatula (Barrel medic), this protein is Leghemoglobin 8.